Here is a 154-residue protein sequence, read N- to C-terminus: Myoglobin (154 aa).

The Globin domain maps to Gly-2 to Lys-148. Ser-4 carries the post-translational modification Phosphoserine. Residue His-65 participates in nitrite binding. His-65 serves as a coordination point for O2. Thr-68 carries the post-translational modification Phosphothreonine. His-94 is a heme b binding site.

It belongs to the globin family. Monomeric.

Its subcellular location is the cytoplasm. The protein localises to the sarcoplasm. The enzyme catalyses Fe(III)-heme b-[protein] + nitric oxide + H2O = Fe(II)-heme b-[protein] + nitrite + 2 H(+). The catalysed reaction is H2O2 + AH2 = A + 2 H2O. Monomeric heme protein which primary function is to store oxygen and facilitate its diffusion within muscle tissues. Reversibly binds oxygen through a pentacoordinated heme iron and enables its timely and efficient release as needed during periods of heightened demand. Depending on the oxidative conditions of tissues and cells, and in addition to its ability to bind oxygen, it also has a nitrite reductase activity whereby it regulates the production of bioactive nitric oxide. Under stress conditions, like hypoxia and anoxia, it also protects cells against reactive oxygen species thanks to its pseudoperoxidase activity. The polypeptide is Myoglobin (MB) (Pusa sibirica (Baikal seal)).